We begin with the raw amino-acid sequence, 222 residues long: Eukaryotic translation initiation factor 4E-1 (222 aa).

Residues 1–22 (MVDEVEKPASLEESKTNTREVE) are compositionally biased toward basic and acidic residues. The segment at 1–37 (MVDEVEKPASLEESKTNTREVEEGAEEVIESDDTMSS) is disordered. Acidic residues predominate over residues 23-33 (EGAEEVIESDD). EIF4G-binding stretches follow at residues 47-50 (HPLE) and 57-93 (FDNP…NNIH). MRNA is bound by residues 65 to 70 (KQAAWG), Lys97, and 115 to 116 (WE). A disulfide bridge links Cys120 with Cys158. Positions 141 to 150 (YTLLAMIGEQ) are EIF4G-binding. MRNA is bound by residues 165–170 (RVRQEK) and 210–214 (KKLDR).

It belongs to the eukaryotic initiation factor 4E family. As to quaternary structure, EIF4F is a multi-subunit complex, the composition of which varies with external and internal environmental conditions. It is composed of at least EIF4A, EIF4E and EIF4G. EIF4E is also known to interact with other partners. In higher plants two isoforms of EIF4F have been identified, named isoform EIF4F and isoform EIF(iso)4F. Isoform EIF4F has subunits p220 and p26, whereas isoform EIF(iso)4F has subunits p82 and p28. Post-translationally, according to the redox status, the Cys-120-Cys-158 disulfide bridge may have a role in regulating protein function by affecting its ability to bind capped mRNA. As to expression, expressed ubiquitously in seedlings, roots, leaves, sepals, petals, anthers and dehisced pollen, with highest levels in pollen, maturing anthers and roots. Strongly expressed in susceptible plants but not in resistant ones.

The protein resides in the nucleus. Its subcellular location is the cytoplasm. In terms of biological role, component of the protein complex eIF4F, which is involved in the recognition of the mRNA cap, ATP-dependent unwinding of 5'-terminal secondary structure and recruitment of mRNA to the ribosome. Recognizes and binds the 7-methylguanosine-containing mRNA cap during an early step in the initiation of protein synthesis and facilitates ribosome binding by inducing the unwinding of the mRNAs secondary structures. Key component of recessive resistance to potyviruses. (Microbial infection) Susceptibility host factor required for viral infection (e.g. potato virus Y (PVY) and pepper mottle virus (PepMoV)) by recruiting viral RNAs to the host ribosomal complex via an interaction with viral genome-linked protein (VPg). In Nicotiana tabacum (Common tobacco), this protein is Eukaryotic translation initiation factor 4E-1.